The chain runs to 512 residues: NAD(P)H-quinone oxidoreductase subunit 2 B, chloroplastic (512 aa).

14 consecutive transmembrane segments (helical) span residues 31–51 (FIFPECILIFGLILLLMIDLT), 57–77 (IPWLYFISSTSFVMSITALLF), 99–119 (IFQFLILLCSTLCIPLSVEYI), 124–144 (MAITEFLLFILTATLGGMFLC), 149–169 (LITIFVALECFSLCSYLLSGY), 183–203 (YLLMGGASSSILVYGFSWLYG), 229–249 (ISIALIFITVGIGFKLSLAPF), 261–281 (PTPVVAFLSVTSKVAALALAT), 295–315 (WHLLLEILAILSMIFGNLIAI), 323–343 (MLAYSSIGQIGYVIIGIIVGD), 354–374 (YMLFYIAMNLGTFACIILFGL), 395–415 (ALSLALCLLSLGGLPPLAGFF), 418–438 (LYLFWCGWQAGLYFLVSIGLL), and 484–504 (MIVCVIASTILGISMNPIIAI).

The protein belongs to the complex I subunit 2 family. As to quaternary structure, NDH is composed of at least 16 different subunits, 5 of which are encoded in the nucleus.

It localises to the plastid. Its subcellular location is the chloroplast thylakoid membrane. It catalyses the reaction a plastoquinone + NADH + (n+1) H(+)(in) = a plastoquinol + NAD(+) + n H(+)(out). It carries out the reaction a plastoquinone + NADPH + (n+1) H(+)(in) = a plastoquinol + NADP(+) + n H(+)(out). NDH shuttles electrons from NAD(P)H:plastoquinone, via FMN and iron-sulfur (Fe-S) centers, to quinones in the photosynthetic chain and possibly in a chloroplast respiratory chain. The immediate electron acceptor for the enzyme in this species is believed to be plastoquinone. Couples the redox reaction to proton translocation, and thus conserves the redox energy in a proton gradient. The polypeptide is NAD(P)H-quinone oxidoreductase subunit 2 B, chloroplastic (Arabidopsis thaliana (Mouse-ear cress)).